Reading from the N-terminus, the 358-residue chain is Alanine racemase (358 aa).

The active-site Proton acceptor; specific for D-alanine is the lysine 34. Lysine 34 carries the post-translational modification N6-(pyridoxal phosphate)lysine. A substrate-binding site is contributed by arginine 129. Catalysis depends on tyrosine 254, which acts as the Proton acceptor; specific for L-alanine. Position 302 (methionine 302) interacts with substrate.

This sequence belongs to the alanine racemase family. Pyridoxal 5'-phosphate is required as a cofactor.

The enzyme catalyses L-alanine = D-alanine. The protein operates within amino-acid biosynthesis; D-alanine biosynthesis; D-alanine from L-alanine: step 1/1. Catalyzes the interconversion of L-alanine and D-alanine. May also act on other amino acids. The polypeptide is Alanine racemase (alr) (Vibrio vulnificus (strain CMCP6)).